We begin with the raw amino-acid sequence, 483 residues long: Probable glycosyltransferase 4 (483 aa).

At methionine 1–leucine 26 the chain is on the cytoplasmic side. The chain crosses the membrane as a helical; Signal-anchor for type II membrane protein span at residues leucine 27–phenylalanine 47. Topologically, residues threonine 48–methionine 483 are lumenal. Residues alanine 71 to arginine 119 are disordered. Pro residues predominate over residues serine 77 to leucine 108. Asparagine 448 carries an N-linked (GlcNAc...) asparagine glycan.

Belongs to the glycosyltransferase 34 family.

The protein localises to the golgi apparatus membrane. In terms of biological role, probable glycosyltransferase that may be involved in the biosynthesis of xyloglucan. The sequence is that of Probable glycosyltransferase 4 from Oryza sativa subsp. indica (Rice).